A 358-amino-acid polypeptide reads, in one-letter code: MAIKKLNNITLTPLQKQNRKKIQVWLYTILLLCFAIVLVGGATRLTGSGLSITEWKPIHGVIPPISINQWQEEFLKYQQIAQYKVLNRDMTLNAFKVIFWWEWGHRVLGRFVGLVALLGLVLFWVTKRIEKNIFLQLLTVPILIAMQGIIGWWMVASGLGQSNLTSVSQYRLAIHLIAACLVIIFVTYLSRGLAEYSEKPANQGVQHFAGWLVFLILVEIYFGALVAGLHAGKVYNTWPLMDGQILPDGLLNYDPVWLNFFENPLTVQFVHRCFSYFLFITAVIHALYVQKSVPHSAHAHRAIFLCIMIVMQAFLGIITLLHEVPISLGLIHQGGALVVLCFSVMHWRATKGAYRVVE.

The next 8 helical transmembrane spans lie at 22–42 (IQVW…VGGA), 107–127 (VLGR…WVTK), 133–153 (IFLQ…IGWW), 172–192 (LAIH…LSRG), 208–228 (FAGW…LVAG), 269–289 (FVHR…ALYV), 302–322 (AIFL…TLLH), and 324–344 (VPIS…CFSV). His-271 contacts heme. Heme is bound at residue His-332.

Belongs to the COX15/CtaA family. Type 2 subfamily. As to quaternary structure, interacts with CtaB. The cofactor is heme b.

The protein resides in the cell membrane. It catalyses the reaction Fe(II)-heme o + 2 A + H2O = Fe(II)-heme a + 2 AH2. It participates in porphyrin-containing compound metabolism; heme A biosynthesis; heme A from heme O: step 1/1. Catalyzes the conversion of heme O to heme A by two successive hydroxylations of the methyl group at C8. The first hydroxylation forms heme I, the second hydroxylation results in an unstable dihydroxymethyl group, which spontaneously dehydrates, resulting in the formyl group of heme A. This Bartonella bacilliformis (strain ATCC 35685 / KC583 / Herrer 020/F12,63) protein is Heme A synthase.